Consider the following 905-residue polypeptide: Nitrate reductase [NADPH] (905 aa).

A disordered region spans residues 1 to 42; it reads METSTTTTLLQQERIPENSEPISTHIHTHSLPPTPPGTAKPS. Cysteine 179 contributes to the Mo-molybdopterin binding site. The region spanning 546-621 is the Cytochrome b5 heme-binding domain; that stretch reads NRKITIEELK…LPTYHIGTLD (76 aa). Residues histidine 581 and histidine 604 each coordinate heme. Residues 648–759 form the FAD-binding FR-type domain; that stretch reads KTWSKAILDK…KGPTGKFVYH (112 aa). FAD-binding positions include 702 to 705, 719 to 723, 733 to 735, serine 783, and threonine 786; these read RSYT, LIKIY, and VMT. Residue 875–884 coordinates NADP(+); the sequence is LLLVCGPPPM.

The protein belongs to the nitrate reductase family. Homodimer. Requires FAD as cofactor. It depends on heme as a cofactor. Mo-molybdopterin serves as cofactor.

It catalyses the reaction nitrite + NADP(+) + H2O = nitrate + NADPH + H(+). Nitrate reductase is a key enzyme involved in the first step of nitrate assimilation in plants, fungi and bacteria. The protein is Nitrate reductase [NADPH] (NIA) of Fusarium oxysporum (Fusarium vascular wilt).